The chain runs to 371 residues: 3-dehydroquinate synthase (371 aa).

NAD(+) contacts are provided by residues Gly114 to Asp118, Thr138 to Thr139, Lys151, Lys160, and Thr178 to Thr181. Positions 193, 258, and 275 each coordinate Zn(2+).

The protein belongs to the sugar phosphate cyclases superfamily. Dehydroquinate synthase family. Co(2+) is required as a cofactor. Requires Zn(2+) as cofactor. The cofactor is NAD(+).

Its subcellular location is the cytoplasm. It carries out the reaction 7-phospho-2-dehydro-3-deoxy-D-arabino-heptonate = 3-dehydroquinate + phosphate. The protein operates within metabolic intermediate biosynthesis; chorismate biosynthesis; chorismate from D-erythrose 4-phosphate and phosphoenolpyruvate: step 2/7. Its function is as follows. Catalyzes the conversion of 3-deoxy-D-arabino-heptulosonate 7-phosphate (DAHP) to dehydroquinate (DHQ). This Synechococcus sp. (strain CC9605) protein is 3-dehydroquinate synthase.